We begin with the raw amino-acid sequence, 347 residues long: CRISPR-associated endonuclease Cas1 4 (347 aa).

Basic and acidic residues predominate over residues 1–21; that stretch reads MNIENEVHIENASESKREPKP. A disordered region spans residues 1–25; that stretch reads MNIENEVHIENASESKREPKPPEGL. Residues Glu176, His241, and Glu256 each coordinate Mn(2+).

The protein belongs to the CRISPR-associated endonuclease Cas1 family. In terms of assembly, homodimer, forms a heterotetramer with a Cas2 homodimer. Requires Mg(2+) as cofactor. It depends on Mn(2+) as a cofactor.

In terms of biological role, CRISPR (clustered regularly interspaced short palindromic repeat), is an adaptive immune system that provides protection against mobile genetic elements (viruses, transposable elements and conjugative plasmids). CRISPR clusters contain spacers, sequences complementary to antecedent mobile elements, and target invading nucleic acids. CRISPR clusters are transcribed and processed into CRISPR RNA (crRNA). Acts as a dsDNA endonuclease. Involved in the integration of spacer DNA into the CRISPR cassette. This chain is CRISPR-associated endonuclease Cas1 4, found in Methanospirillum hungatei JF-1 (strain ATCC 27890 / DSM 864 / NBRC 100397 / JF-1).